Consider the following 180-residue polypeptide: MAFSFKSFFGGADDEEEEYEDSGYEQQPNQGQQQPVNSQQQNTSNQSYSGYNNQNQNRNGFAYDNGYRQQPKMSAVNSSTQSANNSAKIDSHIALFVPKVFSDAKTIVNQLLLHEAVIVNFSAIDETQSAKIVDFVAGAIYAVEGSIEKISDEIWLIAPNNYAVSGSGSAANSMGRNARF.

Positions 1 to 66 (MAFSFKSFFG…NRNGFAYDNG (66 aa)) are disordered. A compositionally biased stretch (acidic residues) spans 12–23 (ADDEEEEYEDSG). Residues 24-57 (YEQQPNQGQQQPVNSQQQNTSNQSYSGYNNQNQN) show a composition bias toward low complexity.

Belongs to the SepF family. In terms of assembly, homodimer. Interacts with FtsZ.

It is found in the cytoplasm. Functionally, cell division protein that is part of the divisome complex and is recruited early to the Z-ring. Probably stimulates Z-ring formation, perhaps through the cross-linking of FtsZ protofilaments. Its function overlaps with FtsA. The chain is Cell division protein SepF from Oenococcus oeni (strain ATCC BAA-331 / PSU-1).